A 94-amino-acid chain; its full sequence is DNA-directed RNA polymerase subunit omega (94 aa).

This sequence belongs to the RNA polymerase subunit omega family. The RNAP catalytic core consists of 2 alpha, 1 beta, 1 beta' and 1 omega subunit. When a sigma factor is associated with the core the holoenzyme is formed, which can initiate transcription.

The catalysed reaction is RNA(n) + a ribonucleoside 5'-triphosphate = RNA(n+1) + diphosphate. Functionally, promotes RNA polymerase assembly. Latches the N- and C-terminal regions of the beta' subunit thereby facilitating its interaction with the beta and alpha subunits. In Bifidobacterium animalis subsp. lactis (strain AD011), this protein is DNA-directed RNA polymerase subunit omega.